A 287-amino-acid chain; its full sequence is Diaminopimelate epimerase (287 aa).

Positions 11, 44, and 64 each coordinate substrate. C73 acts as the Proton donor in catalysis. Residues 74-75 (GN), N157, N190, and 208-209 (ER) each bind substrate. C217 (proton acceptor) is an active-site residue. 218 to 219 (GT) contacts substrate.

Belongs to the diaminopimelate epimerase family. Homodimer.

The protein resides in the cytoplasm. The enzyme catalyses (2S,6S)-2,6-diaminopimelate = meso-2,6-diaminopimelate. It functions in the pathway amino-acid biosynthesis; L-lysine biosynthesis via DAP pathway; DL-2,6-diaminopimelate from LL-2,6-diaminopimelate: step 1/1. In terms of biological role, catalyzes the stereoinversion of LL-2,6-diaminopimelate (L,L-DAP) to meso-diaminopimelate (meso-DAP), a precursor of L-lysine and an essential component of the bacterial peptidoglycan. The polypeptide is Diaminopimelate epimerase (Halorhodospira halophila (strain DSM 244 / SL1) (Ectothiorhodospira halophila (strain DSM 244 / SL1))).